A 233-amino-acid chain; its full sequence is Small ribosomal subunit protein uS3 (233 aa).

A KH type-2 domain is found at 39 to 108 (IRTALFKLLK…KLIVNVRVIE (70 aa)).

It belongs to the universal ribosomal protein uS3 family. Part of the 30S ribosomal subunit. Forms a tight complex with proteins S10 and S14.

Its function is as follows. Binds the lower part of the 30S subunit head. Binds mRNA in the 70S ribosome, positioning it for translation. The chain is Small ribosomal subunit protein uS3 from Mycoplasma mycoides subsp. mycoides SC (strain CCUG 32753 / NCTC 10114 / PG1).